A 160-amino-acid polypeptide reads, in one-letter code: Transcription elongation factor GreA (160 aa).

Residues 2–84 (KNTVNDKILL…SKAKIIKADL (83 aa)) adopt a coiled-coil conformation.

The protein belongs to the GreA/GreB family.

Functionally, necessary for efficient RNA polymerase transcription elongation past template-encoded arresting sites. The arresting sites in DNA have the property of trapping a certain fraction of elongating RNA polymerases that pass through, resulting in locked ternary complexes. Cleavage of the nascent transcript by cleavage factors such as GreA or GreB allows the resumption of elongation from the new 3'terminus. GreA releases sequences of 2 to 3 nucleotides. The chain is Transcription elongation factor GreA from Mesomycoplasma hyopneumoniae (strain 232) (Mycoplasma hyopneumoniae).